Consider the following 173-residue polypeptide: Large ribosomal subunit protein uL16 (173 aa).

This sequence belongs to the universal ribosomal protein uL16 family.

This Methanococcus maripaludis (strain C5 / ATCC BAA-1333) protein is Large ribosomal subunit protein uL16.